The primary structure comprises 508 residues: Photosystem II CP47 reaction center protein (508 aa).

6 helical membrane-spanning segments follow: residues Ala-21 to Ser-36, Ile-101 to Trp-115, Gly-140 to Phe-156, Ile-203 to Ser-218, Val-237 to Val-252, and Cys-457 to Arg-472.

Belongs to the PsbB/PsbC family. PsbB subfamily. In terms of assembly, PSII is composed of 1 copy each of membrane proteins PsbA, PsbB, PsbC, PsbD, PsbE, PsbF, PsbH, PsbI, PsbJ, PsbK, PsbL, PsbM, PsbT, PsbX, PsbY, PsbZ, Psb30/Ycf12, at least 3 peripheral proteins of the oxygen-evolving complex and a large number of cofactors. It forms dimeric complexes. It depends on Binds multiple chlorophylls. PSII binds additional chlorophylls, carotenoids and specific lipids. as a cofactor.

The protein localises to the plastid. Its subcellular location is the chloroplast thylakoid membrane. In terms of biological role, one of the components of the core complex of photosystem II (PSII). It binds chlorophyll and helps catalyze the primary light-induced photochemical processes of PSII. PSII is a light-driven water:plastoquinone oxidoreductase, using light energy to abstract electrons from H(2)O, generating O(2) and a proton gradient subsequently used for ATP formation. The chain is Photosystem II CP47 reaction center protein from Zygnema circumcarinatum (Green alga).